We begin with the raw amino-acid sequence, 186 residues long: ATP synthase subunit delta (186 aa).

Belongs to the ATPase delta chain family. F-type ATPases have 2 components, F(1) - the catalytic core - and F(0) - the membrane proton channel. F(1) has five subunits: alpha(3), beta(3), gamma(1), delta(1), epsilon(1). F(0) has three main subunits: a(1), b(2) and c(10-14). The alpha and beta chains form an alternating ring which encloses part of the gamma chain. F(1) is attached to F(0) by a central stalk formed by the gamma and epsilon chains, while a peripheral stalk is formed by the delta and b chains.

It localises to the cell inner membrane. Its function is as follows. F(1)F(0) ATP synthase produces ATP from ADP in the presence of a proton or sodium gradient. F-type ATPases consist of two structural domains, F(1) containing the extramembraneous catalytic core and F(0) containing the membrane proton channel, linked together by a central stalk and a peripheral stalk. During catalysis, ATP synthesis in the catalytic domain of F(1) is coupled via a rotary mechanism of the central stalk subunits to proton translocation. In terms of biological role, this protein is part of the stalk that links CF(0) to CF(1). It either transmits conformational changes from CF(0) to CF(1) or is implicated in proton conduction. This Mesorhizobium japonicum (strain LMG 29417 / CECT 9101 / MAFF 303099) (Mesorhizobium loti (strain MAFF 303099)) protein is ATP synthase subunit delta.